Reading from the N-terminus, the 399-residue chain is Alpha-tubulin N-acetyltransferase (399 aa).

The N-acetyltransferase domain occupies 1–178; the sequence is MEFNFIINKL…NNFVVFDQYF (178 aa). Acetyl-CoA-binding positions include 112 to 125 and 148 to 157; these read FYVHESCQRQGYGK and SPKLIAFLKK. Residues 183–193 are compositionally biased toward polar residues; it reads SSQNKQNQNTR. Residues 183–223 are disordered; the sequence is SSQNKQNQNTRSYSQPYSDYSSQIPTNYPQQQQQQSNSKSY. Residues 194-223 are compositionally biased toward low complexity; it reads SYSQPYSDYSSQIPTNYPQQQQQQSNSKSY.

The protein belongs to the acetyltransferase ATAT1 family.

The catalysed reaction is L-lysyl-[alpha-tubulin] + acetyl-CoA = N(6)-acetyl-L-lysyl-[alpha-tubulin] + CoA + H(+). Functionally, specifically acetylates 'Lys-40' in alpha-tubulin on the lumenal side of microtubules. Promotes microtubule destabilization and accelerates microtubule dynamics; this activity may be independent of acetylation activity. Acetylates alpha-tubulin with a slow enzymatic rate, due to a catalytic site that is not optimized for acetyl transfer. Enters the microtubule through each end and diffuses quickly throughout the lumen of microtubules. Acetylates only long/old microtubules because of its slow acetylation rate since it does not have time to act on dynamically unstable microtubules before the enzyme is released. This chain is Alpha-tubulin N-acetyltransferase, found in Tetrahymena thermophila (strain SB210).